A 699-amino-acid chain; its full sequence is Elongation factor G (699 aa).

The tr-type G domain occupies 8-288; the sequence is EDYRNFGIMA…AVCEYLPSPL (281 aa). Residues 17-24, 86-90, and 140-143 each bind GTP; these read AHIDAGKT, DTPGH, and NKMD.

The protein belongs to the TRAFAC class translation factor GTPase superfamily. Classic translation factor GTPase family. EF-G/EF-2 subfamily.

It localises to the cytoplasm. Its function is as follows. Catalyzes the GTP-dependent ribosomal translocation step during translation elongation. During this step, the ribosome changes from the pre-translocational (PRE) to the post-translocational (POST) state as the newly formed A-site-bound peptidyl-tRNA and P-site-bound deacylated tRNA move to the P and E sites, respectively. Catalyzes the coordinated movement of the two tRNA molecules, the mRNA and conformational changes in the ribosome. This Allorhizobium ampelinum (strain ATCC BAA-846 / DSM 112012 / S4) (Agrobacterium vitis (strain S4)) protein is Elongation factor G.